A 359-amino-acid polypeptide reads, in one-letter code: MIAAQAKLVYQLNKYYTERCQARKAAIAKTIREVCKVVSDVLKEVEVQEPRFISSLSEIDARYEGLEVISPTEFEVVLYLNQMGVFNFVDDGSLPGCAVLKLSDGRKRSMSLWVEFITASGYLSARKIRSRFQTLVAQAVDKCSYRDVVKMIADTSEVKLRIRERYVVQITPAFKCTGIWPRSAAQWPMPHIPWPGPNRVAEVKAEGFNLLSKECYSLTGKQSSAESDAWVLQFGEAENRLLMGGCRNKCLSVLKTLRDRHLELPGQPLNNYHMKTLLLYECEKHPRETDWDEACLGDRLNGILLQLISCLQCRRCPHYFLPNLDLFQGKPHSALESAAKQTWRLAREILTNPKSLDKL.

The protein belongs to the mab-21 family. As to expression, expressed in the adult cerebellum and eye, with lower levels in the adult forebrain. In embryos at 10.5 days post-coitum strongly expressed in the rostral and distal regions of the developing neural retina, with no expression immediately adjacent to the closing optic fissure. Expression is also observed in the dorsal and ventral aspects of the developing forelimb bud and in the developing pharyngeal arches, as well as in the midbrain.

The protein localises to the nucleus. The protein resides in the cytoplasm. In terms of biological role, required for several aspects of embryonic development including normal development of the eye, notochord, neural tube and other organ tissues, and for embryonic turning. This is Protein mab-21-like 2 (Mab21l2) from Mus musculus (Mouse).